A 453-amino-acid chain; its full sequence is Bifunctional protein GlmU (453 aa).

Residues Met-1–Lys-225 form a pyrophosphorylase region. Residues Leu-6–Gly-9, Lys-20, Gln-71, Gly-76–Thr-77, Tyr-98–Asp-100, Gly-135, Glu-150, Asn-165, and Asn-223 each bind UDP-N-acetyl-alpha-D-glucosamine. Asp-100 contacts Mg(2+). A Mg(2+)-binding site is contributed by Asn-223. A linker region spans residues Ala-226–Asp-246. The interval Gly-247–Ser-453 is N-acetyltransferase. 2 residues coordinate UDP-N-acetyl-alpha-D-glucosamine: Arg-329 and Lys-347. The active-site Proton acceptor is His-359. The UDP-N-acetyl-alpha-D-glucosamine site is built by Tyr-362 and Asn-373. Residues Ala-376, Asn-382–Tyr-383, Ser-401, and Ala-419 contribute to the acetyl-CoA site.

This sequence in the N-terminal section; belongs to the N-acetylglucosamine-1-phosphate uridyltransferase family. It in the C-terminal section; belongs to the transferase hexapeptide repeat family. Homotrimer. Requires Mg(2+) as cofactor.

The protein localises to the cytoplasm. It carries out the reaction alpha-D-glucosamine 1-phosphate + acetyl-CoA = N-acetyl-alpha-D-glucosamine 1-phosphate + CoA + H(+). The enzyme catalyses N-acetyl-alpha-D-glucosamine 1-phosphate + UTP + H(+) = UDP-N-acetyl-alpha-D-glucosamine + diphosphate. Its pathway is nucleotide-sugar biosynthesis; UDP-N-acetyl-alpha-D-glucosamine biosynthesis; N-acetyl-alpha-D-glucosamine 1-phosphate from alpha-D-glucosamine 6-phosphate (route II): step 2/2. The protein operates within nucleotide-sugar biosynthesis; UDP-N-acetyl-alpha-D-glucosamine biosynthesis; UDP-N-acetyl-alpha-D-glucosamine from N-acetyl-alpha-D-glucosamine 1-phosphate: step 1/1. It functions in the pathway bacterial outer membrane biogenesis; LPS lipid A biosynthesis. Its function is as follows. Catalyzes the last two sequential reactions in the de novo biosynthetic pathway for UDP-N-acetylglucosamine (UDP-GlcNAc). The C-terminal domain catalyzes the transfer of acetyl group from acetyl coenzyme A to glucosamine-1-phosphate (GlcN-1-P) to produce N-acetylglucosamine-1-phosphate (GlcNAc-1-P), which is converted into UDP-GlcNAc by the transfer of uridine 5-monophosphate (from uridine 5-triphosphate), a reaction catalyzed by the N-terminal domain. In Burkholderia multivorans (strain ATCC 17616 / 249), this protein is Bifunctional protein GlmU.